Consider the following 799-residue polypeptide: Lon protease (799 aa).

A Lon N-terminal domain is found at L7–I200. Position 352-359 (G352–T359) interacts with ATP. The Lon proteolytic domain occupies V587–G768. Residues S674 and K717 contribute to the active site. The tract at residues P772–H799 is disordered.

This sequence belongs to the peptidase S16 family. Homohexamer. Organized in a ring with a central cavity.

It is found in the cytoplasm. The catalysed reaction is Hydrolysis of proteins in presence of ATP.. ATP-dependent serine protease that mediates the selective degradation of mutant and abnormal proteins as well as certain short-lived regulatory proteins. Required for cellular homeostasis and for survival from DNA damage and developmental changes induced by stress. Degrades polypeptides processively to yield small peptide fragments that are 5 to 10 amino acids long. Binds to DNA in a double-stranded, site-specific manner. CcrM is an important target of the Lon protease pathway in C.crescentus. The sequence is that of Lon protease from Caulobacter vibrioides (strain ATCC 19089 / CIP 103742 / CB 15) (Caulobacter crescentus).